Consider the following 88-residue polypeptide: MLTKEEKKAIIEEYQLEEGDTGSPEVQVALLTARIKNLTEHLKEHKHDYHSRRGLLKMVGKRKKLLRYLKRKDINRYRDLINRLGIRG.

Belongs to the universal ribosomal protein uS15 family. As to quaternary structure, part of the 30S ribosomal subunit. Forms a bridge to the 50S subunit in the 70S ribosome, contacting the 23S rRNA.

One of the primary rRNA binding proteins, it binds directly to 16S rRNA where it helps nucleate assembly of the platform of the 30S subunit by binding and bridging several RNA helices of the 16S rRNA. Its function is as follows. Forms an intersubunit bridge (bridge B4) with the 23S rRNA of the 50S subunit in the ribosome. The protein is Small ribosomal subunit protein uS15 of Halothermothrix orenii (strain H 168 / OCM 544 / DSM 9562).